Here is a 402-residue protein sequence, read N- to C-terminus: Tol-Pal system protein TolB (402 aa).

An N-terminal signal peptide occupies residues Met-1–Ala-17.

It belongs to the TolB family. As to quaternary structure, the Tol-Pal system is composed of five core proteins: the inner membrane proteins TolA, TolQ and TolR, the periplasmic protein TolB and the outer membrane protein Pal. They form a network linking the inner and outer membranes and the peptidoglycan layer.

It localises to the periplasm. Part of the Tol-Pal system, which plays a role in outer membrane invagination during cell division and is important for maintaining outer membrane integrity. The protein is Tol-Pal system protein TolB of Campylobacter jejuni subsp. jejuni serotype O:2 (strain ATCC 700819 / NCTC 11168).